A 120-amino-acid polypeptide reads, in one-letter code: Large ribosomal subunit protein uL18 (120 aa).

This sequence belongs to the universal ribosomal protein uL18 family. Part of the 50S ribosomal subunit; part of the 5S rRNA/L5/L18/L25 subcomplex. Contacts the 5S and 23S rRNAs.

In terms of biological role, this is one of the proteins that bind and probably mediate the attachment of the 5S RNA into the large ribosomal subunit, where it forms part of the central protuberance. The sequence is that of Large ribosomal subunit protein uL18 from Bacillus cytotoxicus (strain DSM 22905 / CIP 110041 / 391-98 / NVH 391-98).